Consider the following 394-residue polypeptide: MAKRDYYEVLGVDKNASENDIKKAYRKAAMKYHPDKFANATDAEKKDAEEKFKEINEAYQVLSDNEKKQQYDQFGHAAFEQGGAGFGGGFNAGGFDFGDIFGDNIFGGGGGFGGFEGFSGFGGSSRRSYVEPGNDLRYNLEITLEEAAKGVEKTIKYKRTGKCEHCHGTGAEDDKMKTCPTCNGQGTIKTQQRTILGVMQSQSVCPDCHGTGKVPEKKCKHCRGTGTAKETVEKKINVPAGIDDGQKLKYAGLGEASQSGGPNGDLYIVIRIKPHDIFIRQGDNLYCEVPISYSTAVLGGEVEVPTLNGKKTVKVPEGTESGKLLKVSGEGIKSLKGYGKGDIIVKFTIETPKKLTDKQKELLQKFEESLNDKNYEQKTSFMKRLKKIFKDIID.

Positions 5–75 (DYYEVLGVDK…EKKQQYDQFG (71 aa)) constitute a J domain. The CR-type zinc-finger motif lies at 150–231 (GVEKTIKYKR…CRGTGTAKET (82 aa)). 8 residues coordinate Zn(2+): Cys-163, Cys-166, Cys-179, Cys-182, Cys-205, Cys-208, Cys-219, and Cys-222. CXXCXGXG motif repeat units lie at residues 163 to 170 (CEHCHGTG), 179 to 186 (CPTCNGQG), 205 to 212 (CPDCHGTG), and 219 to 226 (CKHCRGTG).

This sequence belongs to the DnaJ family. Homodimer. Zn(2+) is required as a cofactor.

It localises to the cytoplasm. Its function is as follows. Participates actively in the response to hyperosmotic and heat shock by preventing the aggregation of stress-denatured proteins and by disaggregating proteins, also in an autonomous, DnaK-independent fashion. Unfolded proteins bind initially to DnaJ; upon interaction with the DnaJ-bound protein, DnaK hydrolyzes its bound ATP, resulting in the formation of a stable complex. GrpE releases ADP from DnaK; ATP binding to DnaK triggers the release of the substrate protein, thus completing the reaction cycle. Several rounds of ATP-dependent interactions between DnaJ, DnaK and GrpE are required for fully efficient folding. Also involved, together with DnaK and GrpE, in the DNA replication of plasmids through activation of initiation proteins. In Fusobacterium nucleatum subsp. polymorphum (Fusobacterium polymorphum), this protein is Chaperone protein DnaJ.